The chain runs to 1220 residues: DNA-directed RNA polymerase subunit beta' (1220 aa).

Cys61, Cys63, Cys76, and Cys79 together coordinate Zn(2+). The Mg(2+) site is built by Asp450, Asp452, and Asp454. The segment at 1197-1220 (QPEVEQEPTPDIPKLDDVAKSFEE) is disordered. The segment covering 1209–1220 (PKLDDVAKSFEE) has biased composition (basic and acidic residues).

This sequence belongs to the RNA polymerase beta' chain family. In terms of assembly, the RNAP catalytic core consists of 2 alpha, 1 beta, 1 beta' and 1 omega subunit. When a sigma factor is associated with the core the holoenzyme is formed, which can initiate transcription. The cofactor is Mg(2+). Zn(2+) is required as a cofactor.

It catalyses the reaction RNA(n) + a ribonucleoside 5'-triphosphate = RNA(n+1) + diphosphate. Its function is as follows. DNA-dependent RNA polymerase catalyzes the transcription of DNA into RNA using the four ribonucleoside triphosphates as substrates. The protein is DNA-directed RNA polymerase subunit beta' of Leuconostoc citreum (strain KM20).